The following is a 444-amino-acid chain: MAERKYFGTDGVRGKVGSFPITPDFALKLGWAAGKVLATHGSKKVLIGKDTRISGYMLESALEAGLTAAGLSAVFVGPMPTPAVAYLTRTFRAEAGVVISASHNPYDDNGIKFFSAEGTKLPDDVEEAIEALLEQPMDCVESAELGKASRINDAAGRYIEFCKSTFPTSLSLEGYKIVVDCAHGATYHIAPSVLRELGAEIIEIGTKPNGLNINEKCGATDIEALRHKVLEIGADVGLAYDGDGDRIMMVDHLGNKVDGDQILYIIARETLRAGHLKGGVVGTLMSNMSLEIALKQLGIPFLRANVGDRYVLEKMQENGWKLGGENSGHIIILDKNTTGDGIIASLAVLTAMAQHKLSLHELTGAVKLFPQVLINVRFAGGENPLNSEKVKAVAAEVEQRLAGKGRILLRKSGTEPLIRVMVECEDAVLAQKSAEEIAEAVKNS.

Catalysis depends on serine 102, which acts as the Phosphoserine intermediate. Positions 102, 241, 243, and 245 each coordinate Mg(2+). Residue serine 102 is modified to Phosphoserine.

It belongs to the phosphohexose mutase family. Mg(2+) is required as a cofactor. In terms of processing, activated by phosphorylation.

It carries out the reaction alpha-D-glucosamine 1-phosphate = D-glucosamine 6-phosphate. In terms of biological role, catalyzes the conversion of glucosamine-6-phosphate to glucosamine-1-phosphate. The polypeptide is Phosphoglucosamine mutase (Actinobacillus succinogenes (strain ATCC 55618 / DSM 22257 / CCUG 43843 / 130Z)).